A 228-amino-acid polypeptide reads, in one-letter code: CD302 antigen (228 aa).

Positions 1–20 (MPHAALSSLVLLSLATAIVA) are cleaved as a signal peptide. Residues 21 to 165 (DCPSSTWVQF…YDKKYLSDNH (145 aa)) lie on the Extracellular side of the membrane. The 120-residue stretch at 30 to 149 (FQGSCYAFLQ…CEISSVEGTL (120 aa)) folds into the C-type lectin domain. The N-linked (GlcNAc...) asparagine glycan is linked to Asn107. An intrachain disulfide couples Cys125 to Cys140. The helical transmembrane segment at 166–186 (ILISTLVIASTVTLAVLGAII) threads the bilayer. Topologically, residues 187 to 228 (WFLYRRNARSGFTSFSPAPLSPYSDGCALVVAEEDEYAVQLD) are cytoplasmic.

The protein resides in the membrane. The protein localises to the cell projection. Its subcellular location is the filopodium. It is found in the cytoplasm. It localises to the cell cortex. The protein resides in the microvillus. Its function is as follows. Potential multifunctional C-type lectin receptor that may play roles in endocytosis and phagocytosis as well as in cell adhesion and migration. This chain is CD302 antigen (Cd302), found in Mus musculus (Mouse).